Here is a 763-residue protein sequence, read N- to C-terminus: Thyrotropin receptor (763 aa).

The N-terminal stretch at 1 to 21 (MRPTPLLRLALFLVLPSSLGG) is a signal peptide. The Extracellular segment spans residues 22–412 (ERCPSPPCEC…EFNPCEDIMG (391 aa)). A disulfide bond links C31 and C41. An LRR 1 repeat occupies 51–74 (PPSTQTLKFIETHLKTIPSRAFSN). N-linked (GlcNAc...) asparagine glycans are attached at residues N77 and N99. 5 LRR repeats span residues 125-150 (LPLLKFLGIFNTGLRVFPDLTKIYST), 151-174 (DVFFILEITDNPYMTSIPANAFQG), 176-199 (CNETLTLKLYNNGFTSIQGHAFNG), 201-223 (KLDAVYLNKNKYLTVIGQDAFAG), and 225-248 (YSGPTLLDISYTSVTALPSKGLEH). N177 and N198 each carry an N-linked (GlcNAc...) asparagine glycan. N302 carries an N-linked (GlcNAc...) asparagine glycan. Y384 bears the Sulfotyrosine mark. Residues 413 to 440 (YKFLRIVVWFVSLLALLGNVFVLVILLT) traverse the membrane as a helical segment. At 441 to 449 (SHYKLTVPR) the chain is on the cytoplasmic side. A helical transmembrane segment spans residues 450–472 (FLMCNLAFADFCMGLYLLLIASV). The Extracellular portion of the chain corresponds to 473-493 (DLYTQSEYYNHAIDWQTGPGC). An intrachain disulfide couples C493 to C568. Residues 494–516 (NTAGFFTVFASELSVYTLTVITL) traverse the membrane as a helical segment. Residues 517–536 (ERWHAITFAMRLDRKIRLWH) lie on the Cytoplasmic side of the membrane. A helical membrane pass occupies residues 537-559 (AYVIMLGGWVCCFLLALLPLVGI). Over 560–579 (SSYAKVSICLPMDTETPLAL) the chain is Extracellular. A helical transmembrane segment spans residues 580–601 (AYIILVLLLNIIAFIIVCACYV). Topologically, residues 602–624 (KIYITVRNPHYNPGDKDTRIAKR) are cytoplasmic. Residues 625–648 (MAVLIFTDFMCMAPISFYALSALM) traverse the membrane as a helical segment. The Extracellular segment spans residues 649–659 (NKPLITVTNSK). A helical membrane pass occupies residues 660–681 (ILLVLFYPLNSCANPFLYAIFT). At 682–763 (KAFQRDVFML…TSKEYKRTVL (82 aa)) the chain is on the cytoplasmic side. Residues 742-763 (ENSHLTPKQQDQTSKEYKRTVL) are disordered. Over residues 744 to 753 (SHLTPKQQDQ) the composition is skewed to polar residues. Basic and acidic residues predominate over residues 754–763 (TSKEYKRTVL). The PDZ-binding motif lies at 761–763 (TVL).

This sequence belongs to the G-protein coupled receptor 1 family. FSH/LSH/TSH subfamily. Interacts with heterodimer GPHA2:GPHB5; this interaction stimulates cAMP production. Interacts (via the PDZ-binding motif) with SCRIB; regulates TSHR trafficking and function. Glycosylated. Post-translationally, sulfated. Sulfation on Tyr-384 plays a role in thyrotropin receptor binding and activation.

The protein localises to the cell membrane. It localises to the basolateral cell membrane. Receptor for the thyroid-stimulating hormone (TSH) or thyrotropin. Also acts as a receptor for the heterodimeric glycoprotein hormone (GPHA2:GPHB5) or thyrostimulin. The activity of this receptor is mediated by G proteins which activate adenylate cyclase. Plays a central role in controlling thyroid cell metabolism. This Bos taurus (Bovine) protein is Thyrotropin receptor (TSHR).